The primary structure comprises 285 residues: MTKEMQTLALAPVGNLESYIRAANTWPMLTAEEEKELAEKLHYQGDLEAAKTLILSHLRFVVHVARNYAGYGLPQADLIQEGNIGLMKAVRRFNPEVGVRLVSFAVHWIKAEIHEYVLRNWRIVKVATTKAQRKLFFNLRKTKQRLGWFNQDEVEMVARELGVSSKDVREMESRMAAQDMTFDMSADDDASDSQPMAPVLYLQDKTSNFADGIEEDNWEDQAANKLTFAMEGLDERSQDIIRARWLDEDNKSTLQELADRYGVSAERVRQLEKNAMKKLRAAIEA.

A sigma-70 factor domain-2 region spans residues 53 to 122; the sequence is LILSHLRFVV…IHEYVLRNWR (70 aa). Residues 77–80 carry the Interaction with polymerase core subunit RpoC motif; sequence DLIQ. The interval 229-281 is sigma-70 factor domain-4; sequence AMEGLDERSQDIIRARWLDEDNKSTLQELADRYGVSAERVRQLEKNAMKKLRA. The segment at residues 254-273 is a DNA-binding region (H-T-H motif); that stretch reads LQELADRYGVSAERVRQLEK.

Belongs to the sigma-70 factor family. RpoH subfamily. As to quaternary structure, interacts with the RNA polymerase core enzyme.

The protein resides in the cytoplasm. In terms of biological role, sigma factors are initiation factors that promote the attachment of RNA polymerase to specific initiation sites and are then released. This sigma factor is involved in regulation of expression of heat shock genes. The chain is RNA polymerase sigma factor RpoH from Enterobacter cloacae.